We begin with the raw amino-acid sequence, 620 residues long: Chaperone protein HscA homolog (620 aa).

This sequence belongs to the heat shock protein 70 family.

In terms of biological role, chaperone involved in the maturation of iron-sulfur cluster-containing proteins. Has a low intrinsic ATPase activity which is markedly stimulated by HscB. This is Chaperone protein HscA homolog from Neisseria meningitidis serogroup A / serotype 4A (strain DSM 15465 / Z2491).